A 519-amino-acid chain; its full sequence is Sensor protein RprX (519 aa).

Transmembrane regions (helical) follow at residues 5 to 25 (TIWI…YLQV) and 260 to 280 (IPSM…IYIV). The Histidine kinase domain maps to 296–517 (NMTHEFKTPI…KFIIALPLLK (222 aa)). H299 is subject to Phosphohistidine; by autocatalysis.

It is found in the cell membrane. It catalyses the reaction ATP + protein L-histidine = ADP + protein N-phospho-L-histidine.. In terms of biological role, member of the two-component regulatory system RprX/RprY. May activate RprY by phosphorylation. In Bacteroides fragilis (strain YCH46), this protein is Sensor protein RprX (rprX).